The sequence spans 378 residues: Ribosomal RNA large subunit methyltransferase G (378 aa).

Belongs to the methyltransferase superfamily. RlmG family.

It is found in the cytoplasm. The catalysed reaction is guanosine(1835) in 23S rRNA + S-adenosyl-L-methionine = N(2)-methylguanosine(1835) in 23S rRNA + S-adenosyl-L-homocysteine + H(+). Functionally, specifically methylates the guanine in position 1835 (m2G1835) of 23S rRNA. This Shigella flexneri protein is Ribosomal RNA large subunit methyltransferase G.